A 138-amino-acid chain; its full sequence is UPF0047 protein YjbQ (138 aa).

It belongs to the UPF0047 family.

The polypeptide is UPF0047 protein YjbQ (yjbQ) (Escherichia coli O157:H7).